We begin with the raw amino-acid sequence, 2812 residues long: Polyunsaturated fatty acid synthase subunit A (2812 aa).

A Ketosynthase family 3 (KS3) domain is found at 12 to 472 (DTRIAVIGMS…GANYHAVLEE (461 aa)). Catalysis depends on for beta-ketoacyl synthase activity residues cysteine 213, histidine 348, and histidine 390. Positions 602 to 913 (LFSGQGAQYT…TVSVNPASGK (312 aa)) constitute a Malonyl-CoA:ACP transacylase (MAT) domain. The stretch at 1000 to 1048 (DEEAKREAARLQKQLEDAQRQLDEAKRAADEANQKLAAAKEEAKSAAAS) forms a coiled coil. Carrier domains lie at 1114–1193 (ALLA…KAEI), 1232–1308 (ERAE…KAEI), and 1342–1418 (AKAE…KAEI). Serine 1152, serine 1267, and serine 1377 each carry O-(pantetheine 4'-phosphoryl)serine. Positions 1422 to 1442 (SAPAPAAAAPAPAAPAPAAAA) are disordered. Residues 1423–1442 (APAPAAAAPAPAAPAPAAAA) are compositionally biased toward low complexity. The region spanning 1455-1531 (AKAETVVMEV…EVVDAMKAEI (77 aa)) is the Carrier 4 domain. Serine 1490 is subject to O-(pantetheine 4'-phosphoryl)serine. A disordered region spans residues 1535–1555 (SAPAPAAAAPAPAAPAPAAAA). Residues 1536-1555 (APAPAAAAPAPAAPAPAAAA) are compositionally biased toward low complexity. 4 Carrier domains span residues 1568-1644 (AKAE…KAEI), 1681-1757 (AKAE…KAEI), 1792-1868 (AKAE…KAEI), and 1903-1979 (AKAE…KAEI). 4 positions are modified to O-(pantetheine 4'-phosphoryl)serine: serine 1603, serine 1716, serine 1827, and serine 1938. A Ketoreductase (KR) domain is found at 2257 to 2484 (VVSGGARGIT…VKSICFGPWD (228 aa)). The tract at residues 2524-2651 (EILVGNWRTP…RAVVVLSSQG (128 aa)) is N-terminal hotdog fold. The region spanning 2524–2812 (EILVGNWRTP…SVIATDSLAF (289 aa)) is the PKS/mFAS DH domain. The tract at residues 2540 to 2800 (ETITLHRKIS…NEQGDLFIDV (261 aa)) is dehydratase (DH) domain. Histidine 2559 functions as the Proton acceptor; for dehydratase activity in the catalytic mechanism. The C-terminal hotdog fold stretch occupies residues 2666–2812 (ADPAAQSAVY…SVIATDSLAF (147 aa)). The active-site Proton donor; for dehydratase activity is aspartate 2730.

In terms of assembly, component of the polyunsaturated fatty acid synthase complex composed of at least ORF-A, ORF-B and ORF-C. Requires pantetheine 4'-phosphate as cofactor.

It participates in lipid metabolism; fatty acid biosynthesis. In terms of biological role, poliketide synthase-like protein; part of the polyunsaturated fatty acid synthase composed of the 3 PKS-like subunits A, B and C. While the saturated fatty acids (SFAs) in Thraustochytrium are produced by the conventional fatty acid synthase (FAS) pathway, polyunsaturated fatty acids (PUFAs) including docosahexeanoic acid (DHA) and docosapentaenoic acid (DPA) are synthesized via an anaerobical PKS pathway. PUFA synthase assimilates fatty acyl-CoA, the product of FAS, as the starter unit to synthesize DPA, and this starter unit may be butyryl-CoA, hexanoyl-CoA, or octanoyl-CoA. DPA and DHA biosynthesis seem to differ by the reduction at the N-3 position by PUFA synthase, not the extension of carbon chain. In DHA biosynthesis, PUFA synthase extends the fatty acyl chain from the methyl toward the carboxyl end, and the double bond is formed when the carbon chain is growing, instead of afterward. Therefore, PUFA synthase is unable to transform DPA to DHA, suggesting that DPA is not the precursor of DHA. Moreover, DPA molecule is partly extended by FAS KS domain, so DPA biosynthesis is less dependent on PUFA synthase KS domain than DHA. In Thraustochytrium sp. (strain ATCC 26185 / S-3), this protein is Polyunsaturated fatty acid synthase subunit A.